Consider the following 223-residue polypeptide: Small ribosomal subunit protein uS3 (223 aa).

In terms of domain architecture, KH type-2 spans 39 to 108; the sequence is IRNFVKKNSY…NILINIVEVK (70 aa).

This sequence belongs to the universal ribosomal protein uS3 family. In terms of assembly, part of the 30S ribosomal subunit. Forms a tight complex with proteins S10 and S14.

Binds the lower part of the 30S subunit head. Binds mRNA in the 70S ribosome, positioning it for translation. This Clostridium botulinum (strain Okra / Type B1) protein is Small ribosomal subunit protein uS3.